Consider the following 123-residue polypeptide: UPF0342 protein LAR_1202 (123 aa).

This sequence belongs to the UPF0342 family.

The chain is UPF0342 protein LAR_1202 from Limosilactobacillus reuteri subsp. reuteri (strain JCM 1112) (Lactobacillus reuteri).